Here is a 208-residue protein sequence, read N- to C-terminus: AN1-type zinc finger protein 6 (208 aa).

Residues 8–42 form an A20-type zinc finger; sequence SQVPMLCSTGCGFYGNPRTNGMCSVCYKEHLQRQN. Zn(2+) contacts are provided by Cys-14, Cys-18, Cys-30, and Cys-33. Positions 41–68 are enriched in polar residues; the sequence is QNSSNGRISPPATSVSSLSESLPVQCTD. The segment at 41–140 is disordered; sequence QNSSNGRISP…PSEEQSKSLE (100 aa). Ser-49 is modified (phosphoserine). Residues 75 to 94 show a composition bias toward low complexity; that stretch reads QSTLDSTSSSMQPSPVSNQS. Composition is skewed to polar residues over residues 95 to 110 and 120 to 133; these read LLSESVASSQLDSTSV and LQASVSDTAQQPSE. The segment at 143-189 adopts an AN1-type zinc-finger fold; it reads KQKKNRCFMCRKKVGLTGFECRCGNVYCGVHRYSDVHNCSYNYKADA. Zn(2+)-binding residues include Cys-149, Cys-152, Cys-163, Cys-165, Cys-170, His-173, His-179, and Cys-181. N6-acetyllysine is present on Lys-204.

Interacts with PKN1. Interacts with TRAF2. Interacts with mono- and polyubiquitin. Interacts with PEX6. Interacts with PEX5 (Cys-linked ubiquitinated).

It is found in the cytoplasm. Functionally, involved in regulation of TNF-alpha induced NF-kappa-B activation and apoptosis. Involved in modulation of 'Lys-48'-linked polyubiquitination status of TRAF2 and decreases association of TRAF2 with RIPK1. Required for PTS1 target sequence-dependent protein import into peroxisomes and PEX5 stability; may cooperate with PEX6. In vitro involved in PEX5 export from the cytosol to peroxisomes. This chain is AN1-type zinc finger protein 6 (ZFAND6), found in Pongo abelii (Sumatran orangutan).